The chain runs to 349 residues: Deoxyguanosinetriphosphate triphosphohydrolase-like protein (349 aa).

In terms of domain architecture, HD spans arginine 80–valine 197.

This sequence belongs to the dGTPase family. Type 2 subfamily.

The sequence is that of Deoxyguanosinetriphosphate triphosphohydrolase-like protein from Clostridium tetani (strain Massachusetts / E88).